Here is a 493-residue protein sequence, read N- to C-terminus: Cysteine--tRNA ligase (493 aa).

Cys29 is a Zn(2+) binding site. The 'HIGH' region motif lies at 31–41 (VTVYDLCHLGH). 3 residues coordinate Zn(2+): Cys213, His238, and Glu242. A 'KMSKS' region motif is present at residues 270–274 (KMSKS). Lys273 contacts ATP.

The protein belongs to the class-I aminoacyl-tRNA synthetase family. As to quaternary structure, monomer. Requires Zn(2+) as cofactor.

The protein resides in the cytoplasm. The catalysed reaction is tRNA(Cys) + L-cysteine + ATP = L-cysteinyl-tRNA(Cys) + AMP + diphosphate. This chain is Cysteine--tRNA ligase, found in Parasynechococcus marenigrum (strain WH8102).